A 446-amino-acid polypeptide reads, in one-letter code: Bifunctional protein GlmU (446 aa).

Residues 1–229 (MTEKPVALIV…EAETLGINTR (229 aa)) form a pyrophosphorylase region. Residues 11-14 (LAAG), Lys-25, Gln-78, 83-84 (GT), 106-108 (YGD), Gly-141, Glu-155, Asn-170, and Asn-227 each bind UDP-N-acetyl-alpha-D-glucosamine. Asp-108 is a Mg(2+) binding site. Asn-227 is a Mg(2+) binding site. Residues 230–250 (AELAAAEAAFQVRARARALED) are linker. An N-acetyltransferase region spans residues 251-446 (GVTMTDPATV…MQALRQKKGN (196 aa)). UDP-N-acetyl-alpha-D-glucosamine-binding residues include Arg-316 and Lys-334. His-346 (proton acceptor) is an active-site residue. The UDP-N-acetyl-alpha-D-glucosamine site is built by Tyr-349 and Asn-360. Residues Ala-363, 369 to 370 (NY), Ser-388, Ser-406, and Arg-423 each bind acetyl-CoA.

In the N-terminal section; belongs to the N-acetylglucosamine-1-phosphate uridyltransferase family. The protein in the C-terminal section; belongs to the transferase hexapeptide repeat family. In terms of assembly, homotrimer. Mg(2+) is required as a cofactor.

Its subcellular location is the cytoplasm. The catalysed reaction is alpha-D-glucosamine 1-phosphate + acetyl-CoA = N-acetyl-alpha-D-glucosamine 1-phosphate + CoA + H(+). It carries out the reaction N-acetyl-alpha-D-glucosamine 1-phosphate + UTP + H(+) = UDP-N-acetyl-alpha-D-glucosamine + diphosphate. Its pathway is nucleotide-sugar biosynthesis; UDP-N-acetyl-alpha-D-glucosamine biosynthesis; N-acetyl-alpha-D-glucosamine 1-phosphate from alpha-D-glucosamine 6-phosphate (route II): step 2/2. It participates in nucleotide-sugar biosynthesis; UDP-N-acetyl-alpha-D-glucosamine biosynthesis; UDP-N-acetyl-alpha-D-glucosamine from N-acetyl-alpha-D-glucosamine 1-phosphate: step 1/1. The protein operates within bacterial outer membrane biogenesis; LPS lipid A biosynthesis. Its function is as follows. Catalyzes the last two sequential reactions in the de novo biosynthetic pathway for UDP-N-acetylglucosamine (UDP-GlcNAc). The C-terminal domain catalyzes the transfer of acetyl group from acetyl coenzyme A to glucosamine-1-phosphate (GlcN-1-P) to produce N-acetylglucosamine-1-phosphate (GlcNAc-1-P), which is converted into UDP-GlcNAc by the transfer of uridine 5-monophosphate (from uridine 5-triphosphate), a reaction catalyzed by the N-terminal domain. This is Bifunctional protein GlmU from Paracoccus denitrificans (strain Pd 1222).